Here is a 221-residue protein sequence, read N- to C-terminus: Keratin-associated protein 10-3 (221 aa).

18 tandem repeats follow at residues 26–30 (CCEPP), 31–35 (CCATS), 36–40 (CCAPA), 57–61 (CCQAA), 79–83 (CCQQS), 89–93 (CCTSS), 99–103 (CCVPV), 104–108 (CCKPV), 109–113 (CCVPV), 114–118 (CCKPV), 119–123 (CCKPI), 124–128 (CCVPV), 136–140 (CCQQS), 146–150 (CCTTS), 151–155 (CCRPS), 177–181 (CCAPA), 188–192 (CCRPA), and 210–214 (CCGLS). The 18 X 5 AA repeats of C-C-X(3) stretch occupies residues 26-214 (CCEPPCCATS…RLSSACCGLS (189 aa)).

It belongs to the KRTAP type 10 family. In terms of assembly, interacts with hair keratins. Restricted to a narrow region of the hair fiber cuticle, lying approximately 20 cell layers above the apex of the dermal papilla of the hair root; not detected in any other tissues.

In terms of biological role, in the hair cortex, hair keratin intermediate filaments are embedded in an interfilamentous matrix, consisting of hair keratin-associated proteins (KRTAP), which are essential for the formation of a rigid and resistant hair shaft through their extensive disulfide bond cross-linking with abundant cysteine residues of hair keratins. The matrix proteins include the high-sulfur and high-glycine-tyrosine keratins. This Homo sapiens (Human) protein is Keratin-associated protein 10-3 (KRTAP10-3).